Reading from the N-terminus, the 138-residue chain is Basic phospholipase A2 Bs-N6 (138 aa).

The N-terminal stretch at 1–16 is a signal peptide; that stretch reads MRTLWIVAVLLVGVEG. Intrachain disulfides connect cysteine 42-cysteine 131, cysteine 44-cysteine 60, cysteine 59-cysteine 111, cysteine 65-cysteine 138, cysteine 66-cysteine 104, cysteine 73-cysteine 97, and cysteine 91-cysteine 102. Positions 43, 45, and 47 each coordinate Ca(2+). Residue histidine 63 is part of the active site. Ca(2+) is bound at residue aspartate 64. The active site involves aspartate 105.

In terms of assembly, monomer. Ca(2+) is required as a cofactor. Contains 7 disulfide bonds. As to expression, expressed by the venom gland.

It is found in the secreted. It carries out the reaction a 1,2-diacyl-sn-glycero-3-phosphocholine + H2O = a 1-acyl-sn-glycero-3-phosphocholine + a fatty acid + H(+). Functionally, snake venom phospholipase A2 (PLA2) that shows myotoxic activities. PLA2 catalyzes the calcium-dependent hydrolysis of the 2-acyl groups in 3-sn-phosphoglycerides. This Bothriechis schlegelii (Eyelash palm pitviper) protein is Basic phospholipase A2 Bs-N6.